A 150-amino-acid chain; its full sequence is Galactose-binding lectin (150 aa).

2 residues coordinate D-galactose: H16 and G19. N-linked (GlcNAc...) asparagine glycosylation is present at N26. D-galactose contacts are provided by residues N27, 35 to 37, H64, and G67; that span reads DIH. N74 carries an N-linked (GlcNAc...) asparagine glycan. Residues E75, 83–85, H108, and G111 contribute to the D-galactose site; that span reads DRH. A glycan (N-linked (GlcNAc...) asparagine) is linked at N118. D-galactose is bound by residues N119 and 127 to 129; that span reads DKH.

In terms of assembly, monomer in solution. Homodimer in solution. Exists as a monomer in solution when a low concentration (0.001 mg/ml) of it is present. Homodimers start to appear at a concentration of 0.01 mg/ml and tetramers at a concentration of 0.1 mg/ml. As to expression, highly expressed in mantle and to a lesser extent in muscle, hepatopancreas, gill and hemocytes.

With respect to regulation, bacterial binding activity is inhibited by D-galactose. Hemagglutinating activity is independent of divalent cations Ca2(+) or Mg2(+). It is strongly inhibited by N-acetyl-D-galactosamine (GalNAc), D-galactose and D-talose, and to a lesser extent by melibiose and raffinose. Also inhibited by glycoprotein asialo-bovine submaxillary mucin (BSM). Not inhibited by D-glucose, D-fucose, D-galactitol, N-acetyl-D-glucosamine or lactose. Fungal binding activity is inhibited by D-galactose. Cytotoxic activity against Raji cell line is completely inhibited by galactose, melibiose and raffinose, but not by glucose or lactose. Galactose inhibits binding to laminin and BSM, but not to collagen, gelatin or fibronectin. Its function is as follows. Galactose-binding lectin. Binds both alpha and beta anomer of galactose (Gal), but has a stronger interaction with the glycans having alpha Gal at the non-reducing end and binds beta Gal weakly only in highly branched glycans. Has high affinity to Galalpha1-4Galbeta1-4GlcNAc. Binds N-acetyl-2-deoxy-2-amino-galactose (2-deoxy-GalNAc). Binds N-acetylgalactosamine (GalNAc). Binds porcine stomach mucin (PSM) with high affinity. Binds galactosamine. Binds laminin, bovine submaxillary mucin (BSM), fibronectin, type I collagen and gelatin with a decreasing affinity, respectively. Has hemagglutinating activity towards human type A erythrocytes. Also hemagglutinates human type 0, B and AB erythrocytes as well as rabbit and mouse erythrocytes. Agglutinates both Gram-positive and Gram-negative bacteria including B.subtilis ATCC 6633, S.aureus ATCC 21027 and E.coli 3254, respectively. No agglutination activity towards Gram-positive S.amurskyense CMM 3673. Has bacteriostatic activity on S.amurskyense CMM 3673, B.subtilis ATCC 6633, S.aureus ATCC 21027 and E.coli 3254. However, has no agglutination nor bacteriostatic activity on Gram-negative C.scophthalmum CIP 104199 or A.troitsensis KMM 3674. Inhibits growth of fungi from the genera Aspergillus, Penicillium, Trichoderma and st. Mycelia. Inhibits germination of spores and hyphal growth of them. Has dose-dependent cytotoxic effect on the human globotriaosylceramide (Gb3)-expressing Burkitt's lymphoma (Raji) cell line. Binds to Gb3 in these cells leading to activation of caspase-9/3 and PARP. Has dose-dependent cytotoxic effect on the Gb3-expressing human MCF-7 breast cancer cell line. No cytotoxic effect on myelogenous leukemia K562 cell line, which does not express Gb3. Activates immune responses in mice and increases cytokine production of TNF-alpha, IL-6 and MCP-1 in the serum and the peritoneal lavage of mice. Induces TNF-alpha and IL-6 secretion in mouse RAW264.7 macrophages, mouse bone marrow-derived macrophages, human THP-1 macrophages, human peripheral blood mononuclear cells (PBMCs) and human blood monocyte-derived macrophages. TNF-alpha production in macrophages could not be inhibited by GalNAc, GalN or Gal, indicating that induced cytokine production is separate from its sugar binding activity. Increases intracellular reactive oxygen species levels, expression and phosphorylation of protein kinases PKC alpha/delta, expression of COX-2 and NF-kappaB, and activates the MAPK pathway by increasing the phosphorylation of ERK1/2, JNK1/2 and p38 in mouse RAW264.7 macrophages. Induces endotoxin tolerance in lipopolysaccharide(LPS)-activated macrophages by down-regulating IRAK2 expression, reducing JNK1/2 phosphorylation and NF-kappaB activation. Can slightly increase the bactericidal activity of RAW264.7 macrophages. Has DNA-binding activity. Recognizes pathogen-associated molecular patterns (PAMPs) and binds to LPS from E.coli, but has only little binding to beta-1,3-glucan from E.gracilis and peptidoglycan from S.aureus. Activates secretion of TNF-alpha and IFN-gamma by the human peripheral blood cells (HPBCs). May be involved in innate immunity acting as an antibacterial and antifungal agent involved in the recognition and clearance of pathogens. This Crenomytilus grayanus (Gray mussel) protein is Galactose-binding lectin.